The sequence spans 383 residues: Queuine tRNA-ribosyltransferase (383 aa).

Asp90 serves as the catalytic Proton acceptor. Residues 90 to 94, Asp144, Gln193, and Gly227 contribute to the substrate site; that span reads DSGGF. The interval 258–264 is RNA binding; that stretch reads GVGTPED. Asp277 functions as the Nucleophile in the catalytic mechanism. Residues 282–286 are RNA binding; important for wobble base 34 recognition; it reads TRNAR. Zn(2+) contacts are provided by Cys315, Cys317, Cys320, and His346.

It belongs to the queuine tRNA-ribosyltransferase family. As to quaternary structure, homodimer. Within each dimer, one monomer is responsible for RNA recognition and catalysis, while the other monomer binds to the replacement base PreQ1. It depends on Zn(2+) as a cofactor.

The enzyme catalyses 7-aminomethyl-7-carbaguanine + guanosine(34) in tRNA = 7-aminomethyl-7-carbaguanosine(34) in tRNA + guanine. It functions in the pathway tRNA modification; tRNA-queuosine biosynthesis. Its function is as follows. Catalyzes the base-exchange of a guanine (G) residue with the queuine precursor 7-aminomethyl-7-deazaguanine (PreQ1) at position 34 (anticodon wobble position) in tRNAs with GU(N) anticodons (tRNA-Asp, -Asn, -His and -Tyr). Catalysis occurs through a double-displacement mechanism. The nucleophile active site attacks the C1' of nucleotide 34 to detach the guanine base from the RNA, forming a covalent enzyme-RNA intermediate. The proton acceptor active site deprotonates the incoming PreQ1, allowing a nucleophilic attack on the C1' of the ribose to form the product. After dissociation, two additional enzymatic reactions on the tRNA convert PreQ1 to queuine (Q), resulting in the hypermodified nucleoside queuosine (7-(((4,5-cis-dihydroxy-2-cyclopenten-1-yl)amino)methyl)-7-deazaguanosine). In Ralstonia nicotianae (strain ATCC BAA-1114 / GMI1000) (Ralstonia solanacearum), this protein is Queuine tRNA-ribosyltransferase.